Consider the following 430-residue polypeptide: PCI domain-containing protein 2 homolog (430 aa).

Positions 243-424 constitute a PCI domain; that stretch reads ITYRFFNGRL…ALVVSPTNPF (182 aa).

This sequence belongs to the CSN12 family.

The polypeptide is PCI domain-containing protein 2 homolog (pcid2) (Dictyostelium discoideum (Social amoeba)).